Reading from the N-terminus, the 583-residue chain is CTP synthase (583 aa).

Positions 1 to 278 (MRKHPQTATK…DAYVVRRLNL (278 aa)) are amidoligase domain. CTP is bound at residue S20. S20 provides a ligand contact to UTP. ATP is bound by residues 21-26 (SLGKGL) and D78. Mg(2+) is bound by residues D78 and E152. Residues 159–161 (DIE), 199–204 (KTKPTQ), and K235 each bind CTP. UTP-binding positions include 199–204 (KTKPTQ) and K235. The Glutamine amidotransferase type-1 domain maps to 303–551 (RIALVGKYVE…VGAAMDYKAG (249 aa)). Position 366 (G366) interacts with L-glutamine. C393 (nucleophile; for glutamine hydrolysis) is an active-site residue. Residues 394–397 (LGLQ), E416, and R477 contribute to the L-glutamine site. Residues H524 and E526 contribute to the active site. The segment at 560-583 (EQSSNGIQHRDSAARPIPEPAARG) is disordered.

The protein belongs to the CTP synthase family. As to quaternary structure, homotetramer.

The enzyme catalyses UTP + L-glutamine + ATP + H2O = CTP + L-glutamate + ADP + phosphate + 2 H(+). The catalysed reaction is L-glutamine + H2O = L-glutamate + NH4(+). It catalyses the reaction UTP + NH4(+) + ATP = CTP + ADP + phosphate + 2 H(+). The protein operates within pyrimidine metabolism; CTP biosynthesis via de novo pathway; CTP from UDP: step 2/2. Allosterically activated by GTP, when glutamine is the substrate; GTP has no effect on the reaction when ammonia is the substrate. The allosteric effector GTP functions by stabilizing the protein conformation that binds the tetrahedral intermediate(s) formed during glutamine hydrolysis. Inhibited by the product CTP, via allosteric rather than competitive inhibition. Functionally, catalyzes the ATP-dependent amination of UTP to CTP with either L-glutamine or ammonia as the source of nitrogen. Regulates intracellular CTP levels through interactions with the four ribonucleotide triphosphates. This Mycolicibacterium paratuberculosis (strain ATCC BAA-968 / K-10) (Mycobacterium paratuberculosis) protein is CTP synthase.